Reading from the N-terminus, the 2327-residue chain is Kielin/chordin-like protein (2327 aa).

A signal peptide spans 1–19 (MNTLLWTILLPLLFSFCVC). The interval 250 to 294 (LPLPYSLSGERQMEDEEIQREPRAPDLSDTDHYQQQQSEVPAQLL) is disordered. The segment covering 268-281 (QREPRAPDLSDTDH) has biased composition (basic and acidic residues). The stretch at 291 to 332 (AQLLAKDDRLQRLEEAVKGLTNMIDMIKSQNADLQARVIALE) forms a coiled coil. 28 consecutive VWFC domains span residues 339-400 (STCV…SVGP), 401-438 (CMSC…PLCA), 439-493 (TGCS…AKCQ), 494-553 (QGCE…PSCP), 554-610 (VCEL…LDCS), 611-669 (ACEM…SQCQ), 670-728 (SCMD…PMCD), 729-786 (GCLY…PRCE), 787-847 (GCEY…PSCD), 848-907 (VCDF…PVCK), 908-966 (VCVQ…PVCD), 967-1025 (SCSY…AKCP), 1026-1083 (DCRY…NNCN), 1084-1142 (GCNY…PQCP), 1146-1203 (ADCP…RSCD), 1204-1260 (GCLM…KECQ), 1261-1319 (DCQY…PVCD), 1321-1377 (CSYN…CPIC), 1378-1439 (QGCH…DGCN), 1440-1495 (YSGR…PRCT), 1496-1555 (GICK…PVCD), 1556-1614 (RCFY…RECP), 1615-1673 (VCRY…PRCR), 1674-1731 (GCVY…PVCA), 1732-1799 (DCIS…SSCA), 1800-1860 (QALS…PVCN), 1861-1924 (ECVV…HECQ), and 1928-1988 (VSCW…PHCI). Positions 1992-2168 (ATCIAFGDPH…SSNDSSSSCW (177 aa)) constitute a VWFD domain. Disulfide bonds link cysteine 1994–cysteine 2126 and cysteine 2016–cysteine 2167. A TIL domain is found at 2259 to 2319 (CPHDRGYVFD…ESHCIPPESC (61 aa)).

The protein localises to the secreted. May be a signaling molecule that mediates inductive activities of the embryonic midline. Able to dorsalize mesoderm. This Xenopus laevis (African clawed frog) protein is Kielin/chordin-like protein (kcp).